We begin with the raw amino-acid sequence, 389 residues long: Formate-dependent phosphoribosylglycinamide formyltransferase (389 aa).

N(1)-(5-phospho-beta-D-ribosyl)glycinamide is bound by residues Glu15–Leu16 and Glu75. Residues Arg107, Lys148, Ser153–Gln158, Glu188–Leu191, and Glu196 contribute to the ATP site. The ATP-grasp domain maps to Asp112–Leu302. 2 residues coordinate Mg(2+): Glu261 and Glu273. N(1)-(5-phospho-beta-D-ribosyl)glycinamide contacts are provided by residues Asp280, Lys350, and Arg357 to Arg358.

This sequence belongs to the PurK/PurT family. In terms of assembly, homodimer.

The enzyme catalyses N(1)-(5-phospho-beta-D-ribosyl)glycinamide + formate + ATP = N(2)-formyl-N(1)-(5-phospho-beta-D-ribosyl)glycinamide + ADP + phosphate + H(+). Its pathway is purine metabolism; IMP biosynthesis via de novo pathway; N(2)-formyl-N(1)-(5-phospho-D-ribosyl)glycinamide from N(1)-(5-phospho-D-ribosyl)glycinamide (formate route): step 1/1. Its function is as follows. Involved in the de novo purine biosynthesis. Catalyzes the transfer of formate to 5-phospho-ribosyl-glycinamide (GAR), producing 5-phospho-ribosyl-N-formylglycinamide (FGAR). Formate is provided by PurU via hydrolysis of 10-formyl-tetrahydrofolate. The chain is Formate-dependent phosphoribosylglycinamide formyltransferase from Synechococcus sp. (strain WH7803).